A 120-amino-acid chain; its full sequence is NAD(P)H-quinone oxidoreductase subunit 3, chloroplastic (120 aa).

The next 3 membrane-spanning stretches (helical) occupy residues 9-29 (IFWA…LFSG), 64-84 (MFAL…PWAM), and 88-108 (ILGV…IVGL).

This sequence belongs to the complex I subunit 3 family. As to quaternary structure, NDH is composed of at least 16 different subunits, 5 of which are encoded in the nucleus.

The protein localises to the plastid. It localises to the chloroplast thylakoid membrane. It carries out the reaction a plastoquinone + NADH + (n+1) H(+)(in) = a plastoquinol + NAD(+) + n H(+)(out). It catalyses the reaction a plastoquinone + NADPH + (n+1) H(+)(in) = a plastoquinol + NADP(+) + n H(+)(out). In terms of biological role, NDH shuttles electrons from NAD(P)H:plastoquinone, via FMN and iron-sulfur (Fe-S) centers, to quinones in the photosynthetic chain and possibly in a chloroplast respiratory chain. The immediate electron acceptor for the enzyme in this species is believed to be plastoquinone. Couples the redox reaction to proton translocation, and thus conserves the redox energy in a proton gradient. The polypeptide is NAD(P)H-quinone oxidoreductase subunit 3, chloroplastic (Spinacia oleracea (Spinach)).